Here is a 195-residue protein sequence, read N- to C-terminus: MDAASRCDLKVFERLIRKWSPRINLVAPSTYDQTWERHILDSAQLYDFLPSTADKVIDLGSGGGLPVVVLGVLAKHRGCRIKFTAIESDARKCAFLRTAARELQINLSVITSRIEAANVEPGNVITARALAPVSKLLEFAEPLRVAGGTCLFLKGENVQNEVSEAKNSWQFEAKYYPSVTSEKSAILEIGEFYRA.

S-adenosyl-L-methionine is bound by residues G60, L65, 114 to 115, and R128; that span reads IE.

Belongs to the methyltransferase superfamily. RNA methyltransferase RsmG family.

The protein localises to the cytoplasm. The catalysed reaction is guanosine(527) in 16S rRNA + S-adenosyl-L-methionine = N(7)-methylguanosine(527) in 16S rRNA + S-adenosyl-L-homocysteine. In terms of biological role, specifically methylates the N7 position of guanine in position 527 of 16S rRNA. In Dinoroseobacter shibae (strain DSM 16493 / NCIMB 14021 / DFL 12), this protein is Ribosomal RNA small subunit methyltransferase G.